Here is a 1486-residue protein sequence, read N- to C-terminus: Chromosome partition protein MukB (1486 aa).

An ATP-binding site is contributed by 34–41; sequence GGNGAGKS. Coiled coils occupy residues 326–418, 444–480, and 509–603; these read LEAD…QYNQ, LETF…QAYQ, and RHLA…RAPV. The segment at 666–783 is flexible hinge; it reads PGGSEDQRLN…EVPLFGRAAR (118 aa). Coiled-coil stretches lie at residues 835-923, 977-1115, and 1209-1266; these read EAEI…AKLE, EMLS…TAKA, and VEAI…QNVS.

The protein belongs to the SMC family. MukB subfamily. In terms of assembly, homodimerization via its hinge domain. Binds to DNA via its C-terminal region. Interacts, and probably forms a ternary complex, with MukE and MukF via its C-terminal region. The complex formation is stimulated by calcium or magnesium. Interacts with tubulin-related protein FtsZ.

It is found in the cytoplasm. The protein resides in the nucleoid. Plays a central role in chromosome condensation, segregation and cell cycle progression. Functions as a homodimer, which is essential for chromosome partition. Involved in negative DNA supercoiling in vivo, and by this means organize and compact chromosomes. May achieve or facilitate chromosome segregation by condensation DNA from both sides of a centrally located replisome during cell division. This Escherichia coli O81 (strain ED1a) protein is Chromosome partition protein MukB.